Consider the following 544-residue polypeptide: Methionine--tRNA ligase (544 aa).

A 'HIGH' region motif is present at residues 10 to 20 (PYANGSLHLGH). Zn(2+)-binding residues include Cys-141, Cys-144, Cys-153, and Cys-156. Positions 329 to 333 (KLSTS) match the 'KMSKS' region motif. Thr-332 serves as a coordination point for ATP.

Belongs to the class-I aminoacyl-tRNA synthetase family. MetG type 1 subfamily. In terms of assembly, monomer. Zn(2+) serves as cofactor.

The protein resides in the cytoplasm. The enzyme catalyses tRNA(Met) + L-methionine + ATP = L-methionyl-tRNA(Met) + AMP + diphosphate. In terms of biological role, is required not only for elongation of protein synthesis but also for the initiation of all mRNA translation through initiator tRNA(fMet) aminoacylation. The sequence is that of Methionine--tRNA ligase from Bacillus cereus (strain 03BB102).